Here is an 81-residue protein sequence, read N- to C-terminus: Cytochrome b559 subunit alpha (81 aa).

Residues 21-35 (VIHSITIPMLFVAGW) traverse the membrane as a helical segment. H23 provides a ligand contact to heme.

It belongs to the PsbE/PsbF family. Heterodimer of an alpha subunit and a beta subunit. PSII is composed of 1 copy each of membrane proteins PsbA, PsbB, PsbC, PsbD, PsbE, PsbF, PsbH, PsbI, PsbJ, PsbK, PsbL, PsbM, PsbT, PsbX, PsbY, PsbZ, Psb30/Ycf12, peripheral proteins PsbO, CyanoQ (PsbQ), PsbU, PsbV and a large number of cofactors. It forms dimeric complexes. Requires heme b as cofactor.

The protein localises to the cellular thylakoid membrane. In terms of biological role, this b-type cytochrome is tightly associated with the reaction center of photosystem II (PSII). PSII is a light-driven water:plastoquinone oxidoreductase that uses light energy to abstract electrons from H(2)O, generating O(2) and a proton gradient subsequently used for ATP formation. It consists of a core antenna complex that captures photons, and an electron transfer chain that converts photonic excitation into a charge separation. This is Cytochrome b559 subunit alpha from Gloeothece citriformis (strain PCC 7424) (Cyanothece sp. (strain PCC 7424)).